A 479-amino-acid polypeptide reads, in one-letter code: Proline--tRNA ligase (479 aa).

This sequence belongs to the class-II aminoacyl-tRNA synthetase family. ProS type 3 subfamily. In terms of assembly, homodimer.

The protein localises to the cytoplasm. The enzyme catalyses tRNA(Pro) + L-proline + ATP = L-prolyl-tRNA(Pro) + AMP + diphosphate. In terms of biological role, catalyzes the attachment of proline to tRNA(Pro) in a two-step reaction: proline is first activated by ATP to form Pro-AMP and then transferred to the acceptor end of tRNA(Pro). The sequence is that of Proline--tRNA ligase from Mesomycoplasma hyopneumoniae (strain J / ATCC 25934 / NCTC 10110) (Mycoplasma hyopneumoniae).